We begin with the raw amino-acid sequence, 628 residues long: MAGGAITPDSLIGLIAEINEIPGNFGLFKKDCSDLARRVGLLTHLIEEIRDSSPPSESDASSSLNSHECDWWSDLVVGLQAAKRLLSSATSFQARESSDGAAKRISFQFQCVTWKLEKALGDLTYDRYDISDEVREQVELARLQLRRAMQRYGSLNSKKFSSGLSEPMEKDASSNRKVIEKLESIPETVHSLSDEKKFESPPPWKSSSVSLAFFLSKDGDDERLEKAVTENSDDSQKSDNLTIPEDFLCPISLELMKDPAIVSTGQTYERSFIQRWIDCGNLSCPKTQQKLENFTLTPNYVLRSLISQWCTKHNIEQPGGYMNGRTKNSDGSFRDLSGDMSAIRALVCKLSSQSIEDRRTAVSEIRSLSKRSTDNRILIAEAGAIPVLVKLLTSDGDTETQENAVTCILNLSIYEHNKELIMLAGAVTSIVLVLRAGSMEARENAAATLFSLSLADENKIIIGASGAIMALVDLLQYGSVRGKKDAATALFNLCIYQGNKGRAVRAGIVKPLVKMLTDSSSERMADEALTILSVLASNQVAKTAILRANAIPPLIDCLQKDQPRNRENAAAILLCLCKRDTEKLISIGRLGAVVPLMELSRDGTERAKRKANSLLELLRKSSRKLGSL.

The U-box domain maps to 242–316 (TIPEDFLCPI…SQWCTKHNIE (75 aa)). ARM repeat units follow at residues 373 to 413 (TDNR…NLSI), 415 to 454 (EHNK…SLSL), 456 to 495 (DENK…NLCI), 497 to 537 (QGNK…VLAS), and 539 to 578 (QVAK…CLCK).

The enzyme catalyses S-ubiquitinyl-[E2 ubiquitin-conjugating enzyme]-L-cysteine + [acceptor protein]-L-lysine = [E2 ubiquitin-conjugating enzyme]-L-cysteine + N(6)-ubiquitinyl-[acceptor protein]-L-lysine.. Its pathway is protein modification; protein ubiquitination. Functions as an E3 ubiquitin ligase. The polypeptide is U-box domain-containing protein 10 (PUB10) (Arabidopsis thaliana (Mouse-ear cress)).